The following is a 422-amino-acid chain: Cytochrome P-450 monooxygenase DoxA (422 aa).

A heme-binding site is contributed by Cys-369.

This sequence belongs to the cytochrome P450 family. Monomer. The cofactor is heme.

The protein resides in the cytoplasm. It catalyses the reaction 13-deoxydaunorubicin + NADPH + O2 + H(+) = 13-dihydrodaunorubicin + NADP(+) + H2O. The catalysed reaction is 13-dihydrodaunorubicin + NADPH + O2 + H(+) = daunorubicin + NADP(+) + 2 H2O. The enzyme catalyses 13-deoxycarminomycin + NADPH + O2 + H(+) = 13-dihydrocarminomycin + NADP(+) + H2O. It carries out the reaction 13-dihydrocarminomycin + NADPH + O2 + H(+) = carminomycin + NADP(+) + 2 H2O. The protein operates within antibiotic biosynthesis; daunorubicin biosynthesis. Its pathway is antibiotic biosynthesis; carminomycin biosynthesis. With respect to regulation, strongly inhibited by dithiothreitol and high ionic strength buffers. Its function is as follows. Involved in the biosynthesis of the anthracyclines carminomycin and daunorubicin (daunomycin) which are aromatic polyketide antibiotics that exhibit high cytotoxicity and are widely applied in the chemotherapy of a variety of cancers. In vivo, DoxA catalyzes the C-13 hydroxylation of 13-deoxycarminomycin and 13-deoxydaunorubicin to yield 13-dihydrocarminomycin and 13-dihydrodaunorubicin, respectively, as well as the oxidation of these 13-dihydro-anthracyclines to their respective 13-keto forms, carminomycin and daunorubicin. In vitro, it also catalyzes the C-14 hydroxylation of daunorubicin to form doxorubicin (adriamycin), although this strain is not a doxorubicin producer. It is not able to accept anthracyclinones (aglycones) and anthracyclines with a 10-carbomethoxyl moiety. 13-oxidation of the anthracyclines possessing the 4-methoxy substitution is greatly favored. The anthracycline analog desacetyladriamycin can be oxidized to 10-hydroxydesacetyladriamycin. It can only use NADP. DoxA acts jointly with DauV. This is Cytochrome P-450 monooxygenase DoxA (doxA) from Streptomyces sp. (strain C5).